The chain runs to 189 residues: Large ribosomal subunit protein uL5 (189 aa).

The protein belongs to the universal ribosomal protein uL5 family. As to quaternary structure, part of the 50S ribosomal subunit; part of the 5S rRNA/L5/L18/L25 subcomplex. Contacts the 5S rRNA and the P site tRNA. Forms a bridge to the 30S subunit in the 70S ribosome.

This is one of the proteins that bind and probably mediate the attachment of the 5S RNA into the large ribosomal subunit, where it forms part of the central protuberance. In the 70S ribosome it contacts protein S13 of the 30S subunit (bridge B1b), connecting the 2 subunits; this bridge is implicated in subunit movement. Contacts the P site tRNA; the 5S rRNA and some of its associated proteins might help stabilize positioning of ribosome-bound tRNAs. The protein is Large ribosomal subunit protein uL5 of Kocuria rhizophila (strain ATCC 9341 / DSM 348 / NBRC 103217 / DC2201).